We begin with the raw amino-acid sequence, 59 residues long: Ferredoxin-2 (59 aa).

2 4Fe-4S ferredoxin-type domains span residues 3-32 (YSVI…LQNG) and 33-59 (KAVP…AIVE). Residues cysteine 12, cysteine 15, cysteine 18, cysteine 22, cysteine 42, cysteine 45, cysteine 48, and cysteine 52 each contribute to the [4Fe-4S] cluster site.

Homodimer. It depends on [4Fe-4S] cluster as a cofactor.

It is found in the periplasm. In terms of biological role, ferredoxins are iron-sulfur proteins that transfer electrons in a wide variety of metabolic reactions. The protein is Ferredoxin-2 of Desulfomicrobium norvegicum (strain DSM 1741 / NCIMB 8310) (Desulfovibrio baculatus (strain Norway 4)).